The sequence spans 485 residues: Adenosylhomocysteinase (485 aa).

Positions 64, 139, and 205 each coordinate substrate. 206–208 (TTT) contributes to the NAD(+) binding site. The substrate site is built by lysine 235 and aspartate 239. NAD(+)-binding positions include asparagine 240, 269 to 274 (GYGDVG), glutamate 292, asparagine 327, 348 to 350 (IGH), and asparagine 397.

This sequence belongs to the adenosylhomocysteinase family. It depends on NAD(+) as a cofactor.

It catalyses the reaction S-adenosyl-L-homocysteine + H2O = L-homocysteine + adenosine. It functions in the pathway amino-acid biosynthesis; L-homocysteine biosynthesis; L-homocysteine from S-adenosyl-L-homocysteine: step 1/1. Functionally, adenosylhomocysteine is a competitive inhibitor of S-adenosyl-L-methionine-dependent methyl transferase reactions; therefore adenosylhomocysteinase may play a key role in the control of methylations via regulation of the intracellular concentration of adenosylhomocysteine. The chain is Adenosylhomocysteinase (SAHH) from Medicago sativa (Alfalfa).